A 295-amino-acid chain; its full sequence is Protoheme IX farnesyltransferase (295 aa).

A run of 9 helical transmembrane segments spans residues 8-28 (ITKP…FFLA), 35-55 (GGLF…GCVF), 83-103 (GVTL…LWFG), 107-127 (LATA…SLYL), 132-152 (IYGT…GYCA), 162-182 (LTLL…IAIF), 208-228 (IFWY…GGYA), 229-249 (GYGY…MALR), and 263-283 (VFIF…IDFQ).

This sequence belongs to the UbiA prenyltransferase family. Protoheme IX farnesyltransferase subfamily.

The protein localises to the cell inner membrane. It catalyses the reaction heme b + (2E,6E)-farnesyl diphosphate + H2O = Fe(II)-heme o + diphosphate. It functions in the pathway porphyrin-containing compound metabolism; heme O biosynthesis; heme O from protoheme: step 1/1. Functionally, converts heme B (protoheme IX) to heme O by substitution of the vinyl group on carbon 2 of heme B porphyrin ring with a hydroxyethyl farnesyl side group. The polypeptide is Protoheme IX farnesyltransferase (Chromohalobacter salexigens (strain ATCC BAA-138 / DSM 3043 / CIP 106854 / NCIMB 13768 / 1H11)).